We begin with the raw amino-acid sequence, 136 residues long: Histone H3.3 (136 aa).

Residues 1–45 are disordered; the sequence is MARTKQTARKSTGGKAPRKQLASKAARKAAPATGGVKKPHRYRPP. Lys-5 carries the post-translational modification N6,N6,N6-trimethyllysine; alternate. Position 5 is an N6,N6-dimethyllysine; alternate (Lys-5). Lys-5 and Lys-10 each carry N6-methyllysine; alternate. Lys-10 carries the post-translational modification N6-acetyllysine; alternate. Ser-11 is modified (phosphoserine). At Lys-15 the chain carries N6,N6-dimethyllysine; alternate. 5 positions are modified to N6-acetyllysine; alternate: Lys-15, Lys-19, Lys-24, Lys-28, and Lys-37. N6-methyllysine; alternate occurs at positions 19, 24, 28, and 37. Residues 19 to 32 are compositionally biased toward low complexity; it reads KQLASKAARKAAPA. An N6,N6,N6-trimethyllysine; alternate mark is found at Lys-28 and Lys-37. An N6,N6-dimethyllysine; alternate mark is found at Lys-28 and Lys-37. Residues Lys-57 and Lys-65 each carry the N6-acetyllysine modification. The residue at position 80 (Lys-80) is an N6,N6,N6-trimethyllysine; alternate. An N6,N6-dimethyllysine; alternate modification is found at Lys-80. At Lys-80 the chain carries N6-methyllysine; alternate. Lys-123 carries the N6-acetyllysine modification.

This sequence belongs to the histone H3 family. The nucleosome is a histone octamer containing two molecules each of H2A, H2B, H3 and H4 assembled in one H3-H4 heterotetramer and two H2A-H2B heterodimers. The octamer wraps approximately 147 bp of DNA. Phosphorylated by ark1 to form H3S10ph in a cell cycle-dependent manner during mitosis and meiosis. H3S10ph is also formed by ssp2, promotes subsequent H3K14ac formation by gcn5, and is required for transcriptional activation through TBP recruitment to the promoters. Dephosphorylation is performed by sds21. In terms of processing, mono-, di- and trimethylated by the COMPASS complex to form H3K4me1/2/3. H3K4me activates gene expression by regulating transcription elongation and plays a role in telomere length maintenance. H3K4me enrichment correlates with transcription levels, and occurs in a 5' to 3' gradient with H3K4me3 enrichment at the 5'-end of genes, shifting to H3K4me2 and then H3K4me1. Methylated by clr4 to form H3K9me1. H3K9me1 represents a specific tag for epigenetic transcriptional repression by recruiting swi6/HP1 to methylated histones. Targeting to histone probably involves clr3 and rik1. Essential for silencing of centromeres and directional switching of the mating type. Methylated by set2 to form H3K36me. H3K36me represses gene expression. Methylated by dot1 to form H3K79me. H3K79me is required for association of SIR proteins with telomeric regions and for telomeric silencing. The COMPASS-mediated formation of H3K4me2/3 and the dot1-mediated formation of H3K79me require H2BK123ub1. Post-translationally, acetylation of histone H3 leads to transcriptional activation. H3K14ac formation by gcn5 is promoted by H3S10ph. H3K14ac can also be formed by esa1. H3K56ac formation occurs predominantly in newly synthesized H3 molecules during G1, S and G2/M of the cell cycle and may be involved in DNA repair. Acetylation at Lys-123 (H3K122ac) plays a central role in chromatin structure: localizes at the surface of the histone octamer and stimulates transcription, possibly by promoting nucleosome instability.

Its subcellular location is the nucleus. The protein resides in the chromosome. Core component of nucleosome. Nucleosomes wrap and compact DNA into chromatin, limiting DNA accessibility to the cellular machineries which require DNA as a template. Histones thereby play a central role in transcription regulation, DNA repair, DNA replication and chromosomal stability. DNA accessibility is regulated via a complex set of post-translational modifications of histones, also called histone code, and nucleosome remodeling. This chain is Histone H3.3 (hht3), found in Schizosaccharomyces pombe (strain 972 / ATCC 24843) (Fission yeast).